The primary structure comprises 328 residues: Lipoyl synthase (328 aa).

7 residues coordinate [4Fe-4S] cluster: Cys-57, Cys-62, Cys-68, Cys-83, Cys-87, Cys-90, and Ser-298. A Radical SAM core domain is found at 69-287 (WSRGTATFML…REEGLSLGFL (219 aa)).

The protein belongs to the radical SAM superfamily. Lipoyl synthase family. The cofactor is [4Fe-4S] cluster.

Its subcellular location is the cytoplasm. It carries out the reaction [[Fe-S] cluster scaffold protein carrying a second [4Fe-4S](2+) cluster] + N(6)-octanoyl-L-lysyl-[protein] + 2 oxidized [2Fe-2S]-[ferredoxin] + 2 S-adenosyl-L-methionine + 4 H(+) = [[Fe-S] cluster scaffold protein] + N(6)-[(R)-dihydrolipoyl]-L-lysyl-[protein] + 4 Fe(3+) + 2 hydrogen sulfide + 2 5'-deoxyadenosine + 2 L-methionine + 2 reduced [2Fe-2S]-[ferredoxin]. It functions in the pathway protein modification; protein lipoylation via endogenous pathway; protein N(6)-(lipoyl)lysine from octanoyl-[acyl-carrier-protein]: step 2/2. Catalyzes the radical-mediated insertion of two sulfur atoms into the C-6 and C-8 positions of the octanoyl moiety bound to the lipoyl domains of lipoate-dependent enzymes, thereby converting the octanoylated domains into lipoylated derivatives. The polypeptide is Lipoyl synthase (Deinococcus geothermalis (strain DSM 11300 / CIP 105573 / AG-3a)).